The sequence spans 81 residues: Small cysteine-rich protein 4 (81 aa).

An N-terminal signal peptide occupies residues 1–23 (MDTKVACLLLIILGALTVQGAVS). A propeptide spanning residues 24 to 25 (GN) is cleaved from the precursor.

The protein belongs to the Cnidaria small cysteine-rich protein (SCRiP) family. beta subfamily. Contains 4 disulfide bonds.

It is found in the secreted. Its subcellular location is the nematocyst. Functionally, induces neurotoxic symptoms on zebrafish. Has also been claimed to be implied in calcification, but tests on homolog proteins suggest that proteins of this family have a neurotoxic function and not a calcification function. The protein is Small cysteine-rich protein 4 of Orbicella faveolata (Mountainous star coral).